We begin with the raw amino-acid sequence, 249 residues long: Ubiquinone biosynthesis O-methyltransferase (249 aa).

The tract at residues 1–23 (MTSPSQVLPASAGKPTGPNADPK) is disordered. Residues arginine 52, glycine 71, aspartate 92, and methionine 136 each contribute to the S-adenosyl-L-methionine site.

It belongs to the methyltransferase superfamily. UbiG/COQ3 family.

The enzyme catalyses a 3-demethylubiquinol + S-adenosyl-L-methionine = a ubiquinol + S-adenosyl-L-homocysteine + H(+). The catalysed reaction is a 3-(all-trans-polyprenyl)benzene-1,2-diol + S-adenosyl-L-methionine = a 2-methoxy-6-(all-trans-polyprenyl)phenol + S-adenosyl-L-homocysteine + H(+). It participates in cofactor biosynthesis; ubiquinone biosynthesis. Functionally, O-methyltransferase that catalyzes the 2 O-methylation steps in the ubiquinone biosynthetic pathway. The sequence is that of Ubiquinone biosynthesis O-methyltransferase from Cupriavidus pinatubonensis (strain JMP 134 / LMG 1197) (Cupriavidus necator (strain JMP 134)).